Consider the following 151-residue polypeptide: Myosin light polypeptide 6 (151 aa).

C2 is subject to N-acetylcysteine. The 36-residue stretch at 7–42 (DQTAEFKEAFQLFDRTGDGKILYSQCGDVMRALGQN) folds into the EF-hand 1 domain. S57 is modified (phosphoserine). Position 81 is an N6-acetyllysine (K81). EF-hand domains lie at 84–119 (GTYEDYVEGLRVFDKEGNGTVMGAEIRHVLVTLGEK) and 119–151 (KMTEEEVEMLVAGHEDSNGCINYEELLRMVLNG).

In terms of assembly, myosin is a hexamer of 2 heavy chains and 4 light chains. Interacts with SPATA6.

Functionally, regulatory light chain of myosin. Does not bind calcium. In Rattus norvegicus (Rat), this protein is Myosin light polypeptide 6 (Myl6).